The primary structure comprises 334 residues: Holliday junction branch migration complex subunit RuvB (334 aa).

The interval 1–182 (MNERMVDQSM…FGVHLRLEYY (182 aa)) is large ATPase domain (RuvB-L). Residues L21, R22, G63, K66, T67, T68, 129–131 (EDF), R172, Y182, and R219 contribute to the ATP site. T67 is a Mg(2+) binding site. The segment at 183–253 (NESDLKEIII…TTKHALGLLQ (71 aa)) is small ATPAse domain (RuvB-S). The tract at residues 256–334 (QHGLDYIDHK…HFAKSNEERE (79 aa)) is head domain (RuvB-H). The DNA site is built by R292, R311, and R316.

It belongs to the RuvB family. As to quaternary structure, homohexamer. Forms an RuvA(8)-RuvB(12)-Holliday junction (HJ) complex. HJ DNA is sandwiched between 2 RuvA tetramers; dsDNA enters through RuvA and exits via RuvB. An RuvB hexamer assembles on each DNA strand where it exits the tetramer. Each RuvB hexamer is contacted by two RuvA subunits (via domain III) on 2 adjacent RuvB subunits; this complex drives branch migration. In the full resolvosome a probable DNA-RuvA(4)-RuvB(12)-RuvC(2) complex forms which resolves the HJ.

The protein resides in the cytoplasm. The catalysed reaction is ATP + H2O = ADP + phosphate + H(+). Functionally, the RuvA-RuvB-RuvC complex processes Holliday junction (HJ) DNA during genetic recombination and DNA repair, while the RuvA-RuvB complex plays an important role in the rescue of blocked DNA replication forks via replication fork reversal (RFR). RuvA specifically binds to HJ cruciform DNA, conferring on it an open structure. The RuvB hexamer acts as an ATP-dependent pump, pulling dsDNA into and through the RuvAB complex. RuvB forms 2 homohexamers on either side of HJ DNA bound by 1 or 2 RuvA tetramers; 4 subunits per hexamer contact DNA at a time. Coordinated motions by a converter formed by DNA-disengaged RuvB subunits stimulates ATP hydrolysis and nucleotide exchange. Immobilization of the converter enables RuvB to convert the ATP-contained energy into a lever motion, pulling 2 nucleotides of DNA out of the RuvA tetramer per ATP hydrolyzed, thus driving DNA branch migration. The RuvB motors rotate together with the DNA substrate, which together with the progressing nucleotide cycle form the mechanistic basis for DNA recombination by continuous HJ branch migration. Branch migration allows RuvC to scan DNA until it finds its consensus sequence, where it cleaves and resolves cruciform DNA. This chain is Holliday junction branch migration complex subunit RuvB, found in Staphylococcus aureus (strain MRSA252).